A 366-amino-acid chain; its full sequence is UDP-N-acetylglucosamine--N-acetylmuramyl-(pentapeptide) pyrophosphoryl-undecaprenol N-acetylglucosamine transferase (366 aa).

UDP-N-acetyl-alpha-D-glucosamine is bound by residues 14-16 (TGG), asparagine 125, arginine 168, serine 196, and glutamine 297.

This sequence belongs to the glycosyltransferase 28 family. MurG subfamily.

The protein resides in the cell inner membrane. It carries out the reaction di-trans,octa-cis-undecaprenyl diphospho-N-acetyl-alpha-D-muramoyl-L-alanyl-D-glutamyl-meso-2,6-diaminopimeloyl-D-alanyl-D-alanine + UDP-N-acetyl-alpha-D-glucosamine = di-trans,octa-cis-undecaprenyl diphospho-[N-acetyl-alpha-D-glucosaminyl-(1-&gt;4)]-N-acetyl-alpha-D-muramoyl-L-alanyl-D-glutamyl-meso-2,6-diaminopimeloyl-D-alanyl-D-alanine + UDP + H(+). It functions in the pathway cell wall biogenesis; peptidoglycan biosynthesis. In terms of biological role, cell wall formation. Catalyzes the transfer of a GlcNAc subunit on undecaprenyl-pyrophosphoryl-MurNAc-pentapeptide (lipid intermediate I) to form undecaprenyl-pyrophosphoryl-MurNAc-(pentapeptide)GlcNAc (lipid intermediate II). In Rhodopseudomonas palustris (strain ATCC BAA-98 / CGA009), this protein is UDP-N-acetylglucosamine--N-acetylmuramyl-(pentapeptide) pyrophosphoryl-undecaprenol N-acetylglucosamine transferase.